Reading from the N-terminus, the 309-residue chain is THAP domain-containing protein 7 (309 aa).

The THAP-type zinc-finger motif lies at 1–93 (MPRHCSAAGC…LKEGAVPTIF (93 aa)). The interval 158 to 209 (TLPASPAGRLEPGLSSPFSDLLGPLGAQADEAGCSAQPSPERQPSPLEPRPV) is disordered. The residue at position 162 (serine 162) is a Phosphoserine. The span at 198-209 (ERQPSPLEPRPV) shows a compositional bias: pro residues. Serine 210 bears the Phosphoserine mark. An HCFC1-binding motif (HBM) motif is present at residues 229 to 232 (EHSY).

Forms homodimers. Interacts with HDAC3 and nuclear hormone receptor corepressors. Interacts via HBM with HCFC1.

It localises to the nucleus. The protein resides in the chromosome. In terms of biological role, chromatin-associated, histone tail-binding protein that represses transcription via recruitment of HDAC3 and nuclear hormone receptor corepressors. This Homo sapiens (Human) protein is THAP domain-containing protein 7 (THAP7).